The following is a 352-amino-acid chain: Protein RecA (352 aa).

67-74 (GPESSGKT) lines the ATP pocket.

The protein belongs to the RecA family.

The protein resides in the cytoplasm. In terms of biological role, can catalyze the hydrolysis of ATP in the presence of single-stranded DNA, the ATP-dependent uptake of single-stranded DNA by duplex DNA, and the ATP-dependent hybridization of homologous single-stranded DNAs. It interacts with LexA causing its activation and leading to its autocatalytic cleavage. This Chlamydia trachomatis serovar A (strain ATCC VR-571B / DSM 19440 / HAR-13) protein is Protein RecA.